The chain runs to 147 residues: Phospholipase A2 inhibitor subunit A (147 aa).

The C-type lectin domain maps to 62–143; the sequence is EICEEAGGHI…DENLLVVCEF (82 aa). 2 cysteine pairs are disulfide-bonded: cysteine 64-cysteine 141 and cysteine 119-cysteine 133. N-linked (GlcNAc...) asparagine glycosylation is present at asparagine 103.

The protein belongs to the alpha-type phospholipase A2 inhibitor family. In terms of assembly, homo- or heterotrimer; homotrimer of PLI-A chains, two PLI-A and one PLI-B chains, one PLI-A and two PLI-B chains, and homotrimer of PLI-B chains (with a ratio of 1:3:3:1). As to expression, expressed by the liver.

It localises to the secreted. In terms of biological role, PLI binds directly phospholipase A2 in the presence or absence of calcium. Inhibitory activity of the PLI-A homotrimer is more specific than that of the PLI-B homotrimer. The chain is Phospholipase A2 inhibitor subunit A from Protobothrops flavoviridis (Habu).